The primary structure comprises 68 residues: Large ribosomal subunit protein bL35 (68 aa).

This sequence belongs to the bacterial ribosomal protein bL35 family.

This is Large ribosomal subunit protein bL35 from Rickettsia typhi (strain ATCC VR-144 / Wilmington).